The sequence spans 305 residues: Protein FdhE homolog (305 aa).

It belongs to the FdhE family.

Its subcellular location is the cytoplasm. Necessary for formate dehydrogenase activity. The sequence is that of Protein FdhE homolog from Stutzerimonas stutzeri (strain A1501) (Pseudomonas stutzeri).